The sequence spans 450 residues: Folate synthesis bifunctional protein (450 aa).

Positions 1–166 are HPPK; it reads MTSWNFVCLS…TFAELAAIYP (166 aa). One can recognise a Pterin-binding domain in the interval 180-441; it reads TQIMGIVNIT…QVEGNRRALA (262 aa). Positions 182-450 are DHPS; the sequence is IMGIVNITDN…AAAAWAGMFV (269 aa). A Mg(2+)-binding site is contributed by Asn-187. Residues Thr-227, Asp-267, Asn-287, Asp-358, Lys-395, and 429-431 each bind (7,8-dihydropterin-6-yl)methyl diphosphate; that span reads RVH.

It in the C-terminal section; belongs to the DHPS family. This sequence in the N-terminal section; belongs to the HPPK family. Mg(2+) is required as a cofactor.

It catalyses the reaction 6-hydroxymethyl-7,8-dihydropterin + ATP = (7,8-dihydropterin-6-yl)methyl diphosphate + AMP + H(+). The enzyme catalyses (7,8-dihydropterin-6-yl)methyl diphosphate + 4-aminobenzoate = 7,8-dihydropteroate + diphosphate. The protein operates within cofactor biosynthesis; tetrahydrofolate biosynthesis; 2-amino-4-hydroxy-6-hydroxymethyl-7,8-dihydropteridine diphosphate from 7,8-dihydroneopterin triphosphate: step 4/4. Its pathway is cofactor biosynthesis; tetrahydrofolate biosynthesis; 7,8-dihydrofolate from 2-amino-4-hydroxy-6-hydroxymethyl-7,8-dihydropteridine diphosphate and 4-aminobenzoate: step 1/2. This is Folate synthesis bifunctional protein (folKP) from Chlamydia trachomatis serovar D (strain ATCC VR-885 / DSM 19411 / UW-3/Cx).